The chain runs to 396 residues: MSKTIAINAGSSSLKWQLYLMPEEKVLAKGLIERIGLKDSISTVKFDGRTEKQVLDITDHTQAVKILLDDLMRFNIIASFDEITGVGHRVVAGGEYFKDSALVDEEVIQKVEELSLLAPLHNPANAAGIRAFKELLPDITSVVVFDTSFHTTMPEKAYRYPLPTKYYKENKVRKYGAHGTSHEYVAHEAAKLLGKPLEELKLITCHIGNGASITAVDKGVSVDTSMGFTPLGGVMMGTRTGDIDPAIIPYLMQHTDDFKTPEDISRILNRESGLLGVSEKSSDMRDIHEAMRAGDAKAQLANDIFVDRIQKYIGQYLAVLNGADAIIFTAGIGENSVTIRKLVIEGISWFGCDIDPEKNVYGQYGNISTPEAKVRVLVIPTDEELVIARDVERFKK.

N8 is a binding site for Mg(2+). Residue K15 coordinates ATP. R89 is a substrate binding site. Residue D146 is the Proton donor/acceptor of the active site. Residues 206–210, 283–285, and 331–335 contribute to the ATP site; these read HIGNG, DMR, and GIGEN. E383 is a binding site for Mg(2+).

The protein belongs to the acetokinase family. Homodimer. Requires Mg(2+) as cofactor. It depends on Mn(2+) as a cofactor.

It is found in the cytoplasm. The catalysed reaction is acetate + ATP = acetyl phosphate + ADP. It participates in metabolic intermediate biosynthesis; acetyl-CoA biosynthesis; acetyl-CoA from acetate: step 1/2. Functionally, catalyzes the formation of acetyl phosphate from acetate and ATP. Can also catalyze the reverse reaction. The protein is Acetate kinase of Streptococcus gordonii (strain Challis / ATCC 35105 / BCRC 15272 / CH1 / DL1 / V288).